The primary structure comprises 1308 residues: Tau-tubulin kinase 1 (1308 aa).

The region spanning 34–297 is the Protein kinase domain; that stretch reads WKVLKKIGGG…LIMSVFENSM (264 aa). Residues 40–48 and Lys-63 each bind ATP; that span reads IGGGGFGEI. Asp-154 acts as the Proton acceptor in catalysis. 6 disordered regions span residues 364 to 397, 418 to 448, 474 to 671, 720 to 899, 985 to 1085, and 1097 to 1308; these read LSDQ…GPEA, PCVE…PVRS, ERRS…APPF, QVPL…AGGG, EMES…LARL, and RLAS…PGAR. Ser-441 is subject to Phosphoserine. The span at 485–496 shows a compositional bias: polar residues; that stretch reads PSRQACSSQPAQ. Position 541 is a phosphoserine (Ser-541). Composition is skewed to basic and acidic residues over residues 541–555 and 574–589; these read SKEW…ELKD and ELRP…RRLG. Residues 638–647 are compositionally biased toward low complexity; it reads SPSHSPLHSG. Positions 735 to 769 are enriched in acidic residues; sequence GEEEEEEEEEEEEEEEEEEEEEEEEEEEEEEEEEA. A compositionally biased stretch (basic and acidic residues) spans 786–795; sequence GSERSTERSQ. 2 stretches are compositionally biased toward polar residues: residues 868 to 885 and 1020 to 1035; these read PTGS…SSIL and ASQQ…TISP. Positions 1097–1107 are enriched in low complexity; that stretch reads RLASGASSSSS.

Belongs to the protein kinase superfamily. CK1 Ser/Thr protein kinase family. Mg(2+) is required as a cofactor. It depends on Mn(2+) as a cofactor. As to expression, expressed in the brain. Strong expression in the cortical layers, the CA1 layers of the hippocampus and the granular layer of the cerebellum. Also expressed in the large cortical pyramidal cells in the temporal cortex, the CA1 pyramidal neurons and the cerebellum granular neurons.

The protein localises to the cytoplasm. The enzyme catalyses L-seryl-[protein] + ATP = O-phospho-L-seryl-[protein] + ADP + H(+). It catalyses the reaction L-threonyl-[protein] + ATP = O-phospho-L-threonyl-[protein] + ADP + H(+). In terms of biological role, serine/threonine kinase which is able to phosphorylate TAU on serine, threonine and tyrosine residues. Induces aggregation of TAU. In Mus musculus (Mouse), this protein is Tau-tubulin kinase 1 (Ttbk1).